The sequence spans 439 residues: Divalent metal cation transporter MntH 1 (439 aa).

The next 9 membrane-spanning stretches (helical) occupy residues 64–84 (FGYA…LLQS), 139–161 (LLGV…VLAL), 171–191 (AIVL…LVLI), 214–234 (PLYL…LYLH), 262–282 (IGSL…AAAA), 300–320 (LLDP…ALLA), 359–379 (LVPA…KLLV), 380–400 (LSQV…IRFS), and 418–438 (LAWS…YFWF).

Belongs to the NRAMP family.

It is found in the cell inner membrane. Its function is as follows. H(+)-stimulated, divalent metal cation uptake system. This is Divalent metal cation transporter MntH 1 from Pseudomonas aeruginosa (strain ATCC 15692 / DSM 22644 / CIP 104116 / JCM 14847 / LMG 12228 / 1C / PRS 101 / PAO1).